The following is an 87-amino-acid chain: Sec-independent protein translocase protein TatA (87 aa).

A helical transmembrane segment spans residues 1-21 (MGGMSITHWIVVAVVVMIFFG). Positions 40–87 (KKGMSEDDTTPPAAPPAPAPRLENQPLPPENTTQNVAQNVPNDIKNNQ) are disordered. Residues 69 to 87 (ENTTQNVAQNVPNDIKNNQ) show a composition bias toward polar residues.

The protein belongs to the TatA/E family. In terms of assembly, the Tat system comprises two distinct complexes: a TatABC complex, containing multiple copies of TatA, TatB and TatC subunits, and a separate TatA complex, containing only TatA subunits. Substrates initially bind to the TatABC complex, which probably triggers association of the separate TatA complex to form the active translocon.

Its subcellular location is the cell inner membrane. Functionally, part of the twin-arginine translocation (Tat) system that transports large folded proteins containing a characteristic twin-arginine motif in their signal peptide across membranes. TatA could form the protein-conducting channel of the Tat system. The chain is Sec-independent protein translocase protein TatA from Zymomonas mobilis subsp. mobilis (strain ATCC 31821 / ZM4 / CP4).